A 199-amino-acid chain; its full sequence is NAD(P)H dehydrogenase (quinone) (199 aa).

The 187-residue stretch at 4–190 (MLVLYYSAYG…DGARFQGRRV (187 aa)) folds into the Flavodoxin-like domain. Residues 10-15 (SAYGHM) and 78-80 (TRY) contribute to the FMN site. NAD(+) is bound at residue Tyr12. Substrate is bound at residue Trp98. FMN is bound by residues 113–119 (STATQYG) and His134. The disordered stretch occupies residues 161–181 (YGMTTTADGDGSRQPSAQELD). Positions 163–177 (MTTTADGDGSRQPSA) are enriched in polar residues.

The protein belongs to the WrbA family. FMN is required as a cofactor.

The catalysed reaction is a quinone + NADH + H(+) = a quinol + NAD(+). The enzyme catalyses a quinone + NADPH + H(+) = a quinol + NADP(+). The chain is NAD(P)H dehydrogenase (quinone) from Brucella canis (strain ATCC 23365 / NCTC 10854 / RM-666).